The following is a 171-amino-acid chain: Co-chaperone protein HscB homolog (171 aa).

Residues Asn-2–Glu-74 form the J domain.

The protein belongs to the HscB family. In terms of assembly, interacts with HscA and stimulates its ATPase activity.

Its function is as follows. Co-chaperone involved in the maturation of iron-sulfur cluster-containing proteins. Seems to help targeting proteins to be folded toward HscA. The polypeptide is Co-chaperone protein HscB homolog (Photobacterium profundum (strain SS9)).